Consider the following 226-residue polypeptide: ATP-dependent Clp protease proteolytic subunit 4 (226 aa).

Serine 122 serves as the catalytic Nucleophile. Residue histidine 147 is part of the active site.

This sequence belongs to the peptidase S14 family. As to quaternary structure, fourteen ClpP subunits assemble into 2 heptameric rings which stack back to back to give a disk-like structure with a central cavity, resembling the structure of eukaryotic proteasomes.

It is found in the cytoplasm. The catalysed reaction is Hydrolysis of proteins to small peptides in the presence of ATP and magnesium. alpha-casein is the usual test substrate. In the absence of ATP, only oligopeptides shorter than five residues are hydrolyzed (such as succinyl-Leu-Tyr-|-NHMec, and Leu-Tyr-Leu-|-Tyr-Trp, in which cleavage of the -Tyr-|-Leu- and -Tyr-|-Trp bonds also occurs).. Cleaves peptides in various proteins in a process that requires ATP hydrolysis. Has a chymotrypsin-like activity. Plays a major role in the degradation of misfolded proteins. This is ATP-dependent Clp protease proteolytic subunit 4 from Streptomyces avermitilis (strain ATCC 31267 / DSM 46492 / JCM 5070 / NBRC 14893 / NCIMB 12804 / NRRL 8165 / MA-4680).